We begin with the raw amino-acid sequence, 787 residues long: Pyridoxal-dependent decarboxylase domain-containing protein 1 (787 aa).

Residues 29 to 41 (EDSQRRTEEENGK) are compositionally biased toward basic and acidic residues. The tract at residues 29–52 (EDSQRRTEEENGKKLLSGDIPGPL) is disordered. Ser-653 is modified (phosphoserine). A disordered region spans residues 683-787 (QGSGVTPPQT…PQVEEPESLR (105 aa)). Polar residues predominate over residues 685 to 697 (SGVTPPQTPTGTR). 2 positions are modified to phosphothreonine: Thr-688 and Thr-692. A phosphoserine mark is found at Ser-711, Ser-719, and Ser-723. Positions 735–745 (QSSGGQEASEA) are enriched in polar residues. Residues Ser-747 and Ser-785 each carry the phosphoserine modification. Basic and acidic residues predominate over residues 774 to 787 (QDDRPQVEEPESLR).

The protein belongs to the group II decarboxylase family. Pyridoxal 5'-phosphate serves as cofactor.

In Bos taurus (Bovine), this protein is Pyridoxal-dependent decarboxylase domain-containing protein 1 (PDXDC1).